Reading from the N-terminus, the 282-residue chain is Elongation factor Ts (282 aa).

The interval 80–83 is involved in Mg(2+) ion dislocation from EF-Tu; sequence TDFV.

Belongs to the EF-Ts family.

It localises to the cytoplasm. Associates with the EF-Tu.GDP complex and induces the exchange of GDP to GTP. It remains bound to the aminoacyl-tRNA.EF-Tu.GTP complex up to the GTP hydrolysis stage on the ribosome. This Pasteurella multocida (strain Pm70) protein is Elongation factor Ts (tsf).